Reading from the N-terminus, the 245-residue chain is Uridylate kinase (245 aa).

13–16 contributes to the ATP binding site; sequence KLSG. Gly-56 is a UMP binding site. 2 residues coordinate ATP: Gly-57 and Arg-61. UMP contacts are provided by residues Asp-76 and 138-145; that span reads TGRPFFTT. Residues Asn-166, Tyr-172, and Asp-175 each coordinate ATP.

Belongs to the UMP kinase family. As to quaternary structure, homohexamer.

It localises to the cytoplasm. The catalysed reaction is UMP + ATP = UDP + ADP. It functions in the pathway pyrimidine metabolism; CTP biosynthesis via de novo pathway; UDP from UMP (UMPK route): step 1/1. Its activity is regulated as follows. Inhibited by UTP. Catalyzes the reversible phosphorylation of UMP to UDP. The sequence is that of Uridylate kinase from Mycoplasma mobile (strain ATCC 43663 / 163K / NCTC 11711) (Mesomycoplasma mobile).